Reading from the N-terminus, the 195-residue chain is UPF0215 protein TSIB_1161 (195 aa).

It belongs to the UPF0215 family.

The polypeptide is UPF0215 protein TSIB_1161 (Thermococcus sibiricus (strain DSM 12597 / MM 739)).